A 2327-amino-acid chain; its full sequence is Genome polyprotein (2327 aa).

Positions 1 to 201 (MNTTDCFIAV…WKASVQRKLK (201 aa)) constitute a Peptidase C28 domain. At 1–1475 (MNTTDCFIAV…SFVKRAFKRL (1475 aa)) the chain is on the cytoplasmic side. Residues Cys51, His148, and Asp163 each act as for leader protease activity in the active site. Disordered stretches follow at residues 196-218 (VQRK…QSGN) and 238-265 (QLGD…NTQN). The N-myristoyl glycine; by host moiety is linked to residue Gly202. Polar residues-rich tracts occupy residues 204–218 (GQSS…QSGN) and 238–251 (QLGD…SNEG). The span at 252–265 (STDTTSTHTTNTQN) shows a compositional bias: low complexity. The interval 787 to 795 (ALLRAATYY) is antigenic epitope. Residues 864-866 (RGD) carry the Cell attachment site motif. The SF3 helicase domain occupies 1184 to 1348 (NVHIANLCKV…DGYKINNKLD (165 aa)). 1212-1219 (GKSGQGKS) contacts ATP. Residues 1476–1496 (KENFEIVALCLTLLANIVIMI) lie within the membrane without spanning it. The Cytoplasmic segment spans residues 1497–2327 (RETHKRQKMV…RWVNAVCGDA (831 aa)). Positions 1524 to 1584 (QTLDEAEKNP…PYAGPLERQR (61 aa)) are disordered. Residues 1544–1558 (FRERTLPGQKARDDV) are compositionally biased toward basic and acidic residues. Tyr1576, Tyr1599, and Tyr1623 each carry O-(5'-phospho-RNA)-tyrosine. In terms of domain architecture, Peptidase C3 spans 1647–1843 (APPTDLQKMV…YCSCVSRSML (197 aa)). The active-site For protease 3C activity; Proton donor/acceptor is His1690. Residues Asp1728 and Cys1807 each act as for protease 3C activity in the active site. The Nuclear localization signal signature appears at 1873–1881 (MRKTKLAPT). Positions 2091–2209 (RNVWDVDYSA…ASDYDLDFEA (119 aa)) constitute a RdRp catalytic domain. Residue Asp2195 is the For RdRp activity of the active site.

The protein belongs to the picornaviruses polyprotein family. As to quaternary structure, interacts with host ISG15. In terms of assembly, interacts (via R-G-D motif) with host ITGAV/ITGB6. Interacts with host MAVS; this interaction inhibits binding of host TRAF3 to MAVS, thereby suppressing interferon-mediated responses. Forms homooligomers. As to quaternary structure, homohexamer. Interacts with host VIM. Interacts with host BECN1. In terms of assembly, interacts with host DCTN3. Interacts with RNA-dependent RNA polymerase; this interaction allows 3B-1 to binds 2 polymerases and act as a primer. It also allows the recruitment of the RNA-dependent RNA polymerase to host membranes. As to quaternary structure, interacts with RNA-dependent RNA polymerase; this interaction allows 3B-2 to act as a primer. In terms of assembly, interacts with RNA-dependent RNA polymerase; this interaction allows 3B-3 to act as a primer. Interacts with 3B-1; this interaction allows 3B-1 to binds 2 polymerases and act as a primer. It also allows the recruitment of the RNA-dependent RNA polymerase to host membranes. Interacts with 3B-2; this interaction allows 3B-2 to act as a primer. Interacts with 3B-3; this interaction allows 3B-3 to act as a primer. Post-translationally, removes six residues from its own C-terminus, generating sLb(pro). In terms of processing, specific enzymatic cleavages in vivo by the viral proteases yield a variety of precursors and mature proteins. The polyprotein seems to be cotranslationally cleaved at the 2A/2B junction by a ribosomal skip from one codon to the next without formation of a peptide bond. This process would release the L-P1-2A peptide from the translational complex. During virion maturation, immature virions are rendered infectious following cleavage of VP0 into VP4 and VP2. This maturation seems to be an autocatalytic event triggered by the presence of RNA in the capsid and is followed by a conformational change of the particle. Post-translationally, myristoylation is required during RNA encapsidation and formation of the mature virus particle. In terms of processing, uridylylated by the polymerase and covalently linked to the 5'-end of genomic RNA. These uridylylated forms act as a nucleotide-peptide primer for the polymerase.

It localises to the host nucleus. The protein resides in the host cytoplasm. Its subcellular location is the virion. It is found in the host endoplasmic reticulum membrane. The protein localises to the host cytoplasmic vesicle membrane. The catalysed reaction is Autocatalytically cleaves itself from the polyprotein of the foot-and-mouth disease virus by hydrolysis of a Lys-|-Gly bond, but then cleaves host cell initiation factor eIF-4G at bonds -Gly-|-Arg- and -Lys-|-Arg-.. It carries out the reaction a ribonucleoside 5'-triphosphate + H2O = a ribonucleoside 5'-diphosphate + phosphate + H(+). The enzyme catalyses RNA(n) + a ribonucleoside 5'-triphosphate = RNA(n+1) + diphosphate. It catalyses the reaction Selective cleavage of Gln-|-Gly bond in the poliovirus polyprotein. In other picornavirus reactions Glu may be substituted for Gln, and Ser or Thr for Gly.. Autocatalytically cleaves itself from the polyprotein at the L/VP0 junction. Also cleaves the host translation initiation factors EIF4G1 and EIF4G3, in order to shut off the capped cellular mRNA transcription. Plays a role in counteracting host innate antiviral response using diverse mechanisms. Possesses a deubiquitinase activity acting on both 'Lys-48' and 'Lys-63'-linked polyubiquitin chains. In turn, inhibits the ubiquitination and subsequent activation of key signaling molecules of type I IFN response such as host RIGI, TBK1, TRAF3 and TRAF6. Inhibits host NF-kappa-B activity by inducing a decrease in RELA mRNA levels. Cleaves a peptide bond in the C-terminus of host ISG15, resulting in the damaging of this modifier that can no longer be attached to target proteins. Also cleaves host G3BP1 and G3BP2 in order to inhibit cytoplasmic stress granules assembly. Functionally, lies on the inner surface of the capsid shell. After binding to the host receptor, the capsid undergoes conformational changes. Capsid protein VP4 is released, capsid protein VP1 N-terminus is externalized, and together, they shape a pore in the host membrane through which the viral genome is translocated into the host cell cytoplasm. After genome has been released, the channel shrinks. In terms of biological role, forms an icosahedral capsid of pseudo T=3 symmetry with capsid proteins VP1 and VP3. The capsid is composed of 60 copies of each capsid protein organized in the form of twelve pentamers and encloses the viral positive strand RNA genome. Upon acidifcation in the endosome, dissociates into pentamers. Its function is as follows. Forms an icosahedral capsid of pseudo T=3 symmetry with capsid proteins VP0 and VP3. The capsid is composed of 60 copies of each capsid protein organized in the form of twelve pentamers and encloses the viral positive strand RNA genome. Upon acidifcation in the endosome, dissociates into pentamers. Forms an icosahedral capsid of pseudo T=3 symmetry with capsid proteins VP2 and VP3. The capsid is composed of 60 copies of each capsid protein organized in the form of twelve pentamers and encloses the viral positive strand RNA genome. Mediates cell entry by attachment to an integrin receptor, usually host ITGAV/ITGB6. In addition, targets host MAVS to suppress type I IFN pathway. Upon acidifcation in the endosome, dissociates into pentamers. Functionally, mediates self-processing of the polyprotein by a translational effect termed 'ribosome skipping'. Mechanistically, 2A-mediated cleavage occurs between the C-terminal glycine and the proline of the downstream protein 2B. In the case of foot-and-mouth disease virus, the 2A oligopeptide is post-translationally 'trimmed' from the C-terminus of the upstream protein 1D by 3C proteinase. In terms of biological role, plays an essential role in the virus replication cycle by acting as a viroporin. Creates a pore in the host endoplasmic reticulum and as a consequence releases Ca2+ in the cytoplasm of infected cell. In turn, high levels of cytoplasmic calcium may trigger membrane trafficking and transport of viral ER-associated proteins to viroplasms, sites of viral genome replication. Its function is as follows. Associates with and induces structural rearrangements of intracellular membranes. Triggers host autophagy by interacting with host BECN1 and thereby promotes viral replication. Participates in viral replication and interacts with host DHX9. Displays RNA-binding, nucleotide binding and NTPase activities. May play a role in virion morphogenesis and viral RNA encapsidation by interacting with the capsid protein VP3. Plays important roles in virus replication, virulence and host range. Cooperates with host DDX56 to inhibit IRF3 nuclear translocation and subsequent type I interferon production. Functionally, covalently linked to the 5'-end of both the positive-strand and negative-strand genomic RNAs. Acts as a genome-linked replication primer. In terms of biological role, cysteine protease that generates mature viral proteins from the precursor polyprotein. In addition to its proteolytic activity, binds to viral RNA and thus influences viral genome replication. RNA and substrate bind cooperatively to the protease. Its function is as follows. RNA-directed RNA polymerase 3D-POL replicates genomic and antigenomic RNA by recognizing replications specific signals. Covalently attaches UMP to a tyrosine of VPg, which is used to prime RNA synthesis. The positive stranded RNA genome is first replicated at virus induced membranous vesicles, creating a dsRNA genomic replication form. This dsRNA is then used as template to synthesize positive stranded RNA genomes. ss(+)RNA genomes are either translated, replicated or encapsidated. This is Genome polyprotein from Bos taurus (Bovine).